We begin with the raw amino-acid sequence, 314 residues long: THAP domain-containing protein 11 (314 aa).

The segment at 1–80 (MPGFTCCVPG…TYTVRVPTIF (80 aa)) adopts a THAP-type zinc-finger fold. The segment at 85 to 111 (VNERKVARRPAGAAAARRRQQQQQQQQ) is disordered. Over residues 93 to 111 (RPAGAAAARRRQQQQQQQQ) the composition is skewed to low complexity. The HCFC1-binding motif (HBM) signature appears at 243-246 (DHSY). Positions 255-305 (EELLRKLNEQRDILALMEVKMKEMKGSIRHLRLTEAKLREELREKDRLLAM) form a coiled coil.

The protein belongs to the THAP11 family. In terms of assembly, forms homodimers. Interacts via HBM with HCFC1. Forms a complex with HCFC1 and ZNF143. In terms of tissue distribution, expressed in skin fibroblasts.

The protein resides in the nucleus. The protein localises to the cytoplasm. Its function is as follows. Transcription factor, which has both transcriptional activation and repression activities. Also modulates chromatin accessibility. In complex with HCFC1 and ZNF143, regulates the expression of several genes, including AP2S1, ESCO2, OPHN1, RBL1, UBXN8 and ZNF32. May regulate the expression of genes that encode both cytoplasmic and mitochondrial ribosomal proteins. Required for normal mitochondrial development and function. Regulates mitochondrial gene expression, including that of components of the electron transport chain. Involved in the maintainance of pluripotency in early embryonic cells, possibly through its action on mitochondrial maturation which is required to meet high energy demands of these cells. Required for early development of retina, preventing premature exit of retinal progenitor cells from the cell cycle. This effect may also be mediated by its action on mitochondria. Through the regulation of MMACHC gene expression, controls cobalamin metabolism. Required for normal brain development and neural precursor differentiation. Involved in cell growth. This is THAP domain-containing protein 11 (THAP11) from Homo sapiens (Human).